The sequence spans 354 residues: DNA integrity scanning protein DisA (354 aa).

In terms of domain architecture, DAC spans 6–144 (GMKIKDTLKI…GDIKYVLRDS (139 aa)). ATP is bound by residues Gly73, Leu91, and 104–108 (TRHRT).

This sequence belongs to the DisA family. As to quaternary structure, homooctamer. The cofactor is Mg(2+).

It catalyses the reaction 2 ATP = 3',3'-c-di-AMP + 2 diphosphate. Participates in a DNA-damage check-point that is active prior to asymmetric division when DNA is damaged. DisA forms globular foci that rapidly scan along the chromosomes during sporulation, searching for lesions. When a lesion is present, DisA pauses at the lesion site. This triggers a cellular response that culminates in a temporary block in sporulation initiation. Functionally, also has diadenylate cyclase activity, catalyzing the condensation of 2 ATP molecules into cyclic di-AMP (c-di-AMP). c-di-AMP acts as a signaling molecule that couples DNA integrity with progression of sporulation. The rise in c-di-AMP level generated by DisA while scanning the chromosome, operates as a positive signal that advances sporulation; upon encountering a lesion, the DisA focus arrests at the damaged site and halts c-di-AMP synthesis. This chain is DNA integrity scanning protein DisA, found in Clostridium botulinum (strain Eklund 17B / Type B).